The following is a 99-amino-acid chain: Large ribosomal subunit protein uL23 (99 aa).

The protein belongs to the universal ribosomal protein uL23 family. As to quaternary structure, part of the 50S ribosomal subunit. Contacts protein L29, and trigger factor when it is bound to the ribosome.

One of the early assembly proteins it binds 23S rRNA. One of the proteins that surrounds the polypeptide exit tunnel on the outside of the ribosome. Forms the main docking site for trigger factor binding to the ribosome. This is Large ribosomal subunit protein uL23 from Hyphomonas neptunium (strain ATCC 15444).